The following is a 287-amino-acid chain: Glutamate racemase (287 aa).

Residues 1–15 (MATKPQDANTTSREA) are compositionally biased toward polar residues. The disordered stretch occupies residues 1 to 25 (MATKPQDANTTSREAITSKADSPPR). Residues 32–33 (DS) and 64–65 (YG) contribute to the substrate site. Residue C96 is the Proton donor/acceptor of the active site. A substrate-binding site is contributed by 97 to 98 (NT). The active-site Proton donor/acceptor is the C208. 209–210 (TH) contributes to the substrate binding site.

It belongs to the aspartate/glutamate racemases family.

The enzyme catalyses L-glutamate = D-glutamate. It participates in cell wall biogenesis; peptidoglycan biosynthesis. Its function is as follows. Provides the (R)-glutamate required for cell wall biosynthesis. The polypeptide is Glutamate racemase (Yersinia pseudotuberculosis serotype O:1b (strain IP 31758)).